A 501-amino-acid chain; its full sequence is Solute carrier family 2, facilitated glucose transporter member 5 (501 aa).

The residue at position 1 (M1) is an N-acetylmethionine. Residues M1–A18 lie on the Cytoplasmic side of the membrane. A helical membrane pass occupies residues L19 to V39. Y32 contributes to the D-fructose binding site. Residues N40–T68 are Extracellular-facing. A glycan (N-linked (GlcNAc...) asparagine) is linked at N51. The chain crosses the membrane as a helical span at residues L69–P91. Residues L92–R98 lie on the Cytoplasmic side of the membrane. A helical membrane pass occupies residues K99–S119. Over R120–E126 the chain is Extracellular. The helical transmembrane segment at L127–Y149 threads the bilayer. The Cytoplasmic segment spans residues L150–A161. Residues L162 to L182 form a helical membrane-spanning segment. A D-fructose-binding site is contributed by Q167. At R183–W192 the chain is on the extracellular side. The helical transmembrane segment at P193–F213 threads the bilayer. At P214–Q277 the chain is on the cytoplasmic side. A helical transmembrane segment spans residues L278–Y298. D-fructose contacts are provided by residues Q288 and I296–Y298. Topologically, residues Y299–H313 are extracellular. A helical membrane pass occupies residues V314–F334. At V335–R342 the chain is on the cytoplasmic side. Residues L343–L363 form a helical membrane-spanning segment. Residues A364–W371 are Extracellular-facing. Residues M372–I394 traverse the membrane as a helical segment. Residue H387 coordinates D-fructose. Residues P395–F412 are Cytoplasmic-facing. The chain crosses the membrane as a helical span at residues M413–I433. Residue H419–W420 coordinates D-fructose. Over Q434 to P439 the chain is Extracellular. A helical membrane pass occupies residues Y440–V460. Over P461–Q501 the chain is Cytoplasmic.

This sequence belongs to the major facilitator superfamily. Sugar transporter (TC 2.A.1.1) family. Glucose transporter subfamily.

The protein localises to the apical cell membrane. It localises to the cell membrane. Its subcellular location is the sarcolemma. It catalyses the reaction D-fructose(out) = D-fructose(in). Functionally, functions as a fructose transporter that has only low activity with other monosaccharides. Can mediate the uptake of deoxyglucose, but with low efficiency. Essential for fructose uptake in the small intestine. Plays a role in the regulation of salt uptake and blood pressure in response to dietary fructose. Required for the development of high blood pressure in response to high dietary fructose intake. The chain is Solute carrier family 2, facilitated glucose transporter member 5 from Pongo abelii (Sumatran orangutan).